Reading from the N-terminus, the 456-residue chain is MSQSPHVTVLGAGLAGTEAAWQVARAGVAVTLVEMRPIRRSPAHHSSDFAELVCSNSFGALSSDRAAGLLQEELRRLGSLVIGTADTHAVPAGGALAVDRGRYSAALTEALDQHPLVTIERREQQNLPPENAITVLATGPLTSEPLAEDLRQFTGRADCHFFDAASPIVHGDSIDLSVAFRASRYDKGDADYINCPMDKEQYLAFRQALLEAEQAELKDFDKNDATFFEGCLPIEELARRGEDTMRYGPLKPIGLWDPRWGDVNDRDVRRAKRAYAVVQLRQEDKDGRLWNLVGFQTNLKWGEQKRVLQMIPGLGQAEFVRFGVMHRNTFLESPQLLQPTLQFRQRPNLLAAGQITGTEGYAAAVAGGWLAGTNAARLALGLEPIDLPATCMSGALTHFVSEAPTAKFQPMPPNFGLLPDLPERIRDKRARYGAYRDRALQDLEPMRALQPETVTA.

FAD is bound at residue 11–16 (GAGLAG).

This sequence belongs to the MnmG family. TrmFO subfamily. Requires FAD as cofactor.

The protein resides in the cytoplasm. It catalyses the reaction uridine(54) in tRNA + (6R)-5,10-methylene-5,6,7,8-tetrahydrofolate + NADH + H(+) = 5-methyluridine(54) in tRNA + (6S)-5,6,7,8-tetrahydrofolate + NAD(+). It carries out the reaction uridine(54) in tRNA + (6R)-5,10-methylene-5,6,7,8-tetrahydrofolate + NADPH + H(+) = 5-methyluridine(54) in tRNA + (6S)-5,6,7,8-tetrahydrofolate + NADP(+). Its function is as follows. Catalyzes the folate-dependent formation of 5-methyl-uridine at position 54 (M-5-U54) in all tRNAs. The sequence is that of Methylenetetrahydrofolate--tRNA-(uracil-5-)-methyltransferase TrmFO from Synechococcus sp. (strain CC9605).